We begin with the raw amino-acid sequence, 236 residues long: MEASVHIGNSVPHAHLHSAAPARPADPVRPDGSRRALRIGLGGPVGSGKTATVAALCRALRDRLSIAVVTNDIYTREDADFLLRHAILPAERILAVETGACPHTAIRDDISANLEAVEQLEATVGPLDLILVESGGDNLTATFSKGLVDAQIFVIDVAGGDDIPRKGGPGITTADLLVINKTDLAPHVGSDLQAMAADAKRQRGERPVAFTSLTADNGVGPVADWVGARLTAWTAA.

Positions 1–40 (MEASVHIGNSVPHAHLHSAAPARPADPVRPDGSRRALRIG) are disordered. 43 to 50 (GPVGSGKT) contributes to the GTP binding site.

This sequence belongs to the SIMIBI class G3E GTPase family. UreG subfamily. As to quaternary structure, homodimer. UreD, UreF and UreG form a complex that acts as a GTP-hydrolysis-dependent molecular chaperone, activating the urease apoprotein by helping to assemble the nickel containing metallocenter of UreC. The UreE protein probably delivers the nickel.

It localises to the cytoplasm. In terms of biological role, facilitates the functional incorporation of the urease nickel metallocenter. This process requires GTP hydrolysis, probably effectuated by UreG. The chain is Urease accessory protein UreG 2 from Saccharopolyspora erythraea (strain ATCC 11635 / DSM 40517 / JCM 4748 / NBRC 13426 / NCIMB 8594 / NRRL 2338).